The primary structure comprises 597 residues: Aspartate--tRNA(Asp/Asn) ligase (597 aa).

Residue E175 coordinates L-aspartate. An aspartate region spans residues 199–202 (QQYK). Residues R221 and H454 each contribute to the L-aspartate site. 221-223 (RDE) serves as a coordination point for ATP. An ATP-binding site is contributed by E488. R495 serves as a coordination point for L-aspartate. Residue 540–543 (GIDR) participates in ATP binding.

This sequence belongs to the class-II aminoacyl-tRNA synthetase family. Type 1 subfamily. In terms of assembly, homodimer.

The protein resides in the cytoplasm. The catalysed reaction is tRNA(Asx) + L-aspartate + ATP = L-aspartyl-tRNA(Asx) + AMP + diphosphate. In terms of biological role, aspartyl-tRNA synthetase with relaxed tRNA specificity since it is able to aspartylate not only its cognate tRNA(Asp) but also tRNA(Asn). Reaction proceeds in two steps: L-aspartate is first activated by ATP to form Asp-AMP and then transferred to the acceptor end of tRNA(Asp/Asn). This chain is Aspartate--tRNA(Asp/Asn) ligase, found in Bartonella tribocorum (strain CIP 105476 / IBS 506).